We begin with the raw amino-acid sequence, 601 residues long: Adenine deaminase (601 aa).

Belongs to the metallo-dependent hydrolases superfamily. Adenine deaminase family. Requires Mn(2+) as cofactor.

It catalyses the reaction adenine + H2O + H(+) = hypoxanthine + NH4(+). This is Adenine deaminase from Ruegeria sp. (strain TM1040) (Silicibacter sp.).